The following is a 302-amino-acid chain: Meiotic recombination protein rec14 (302 aa).

WD repeat units lie at residues 14–51 (AHQA…HSLV), 57–96 (PHKL…FRDL), 101–140 (QHPS…KISE), 142–184 (DTKG…HVLS), 185–226 (GHTS…GQLR), 227–266 (GHAA…CIST), and 269–302 (ETDG…AATE).

Component of the DSB catalytic core (DSBC) complex, composed of at least rec12, rec6 and rec14. The complex interacts with mde2.

Required for formation of the rec12-mediated double-strand breaks (DSBs) that initiate meiotic recombination. This Schizosaccharomyces pombe (strain 972 / ATCC 24843) (Fission yeast) protein is Meiotic recombination protein rec14.